Consider the following 714-residue polypeptide: Ribonucleoside-diphosphate reductase 2 subunit alpha (714 aa).

Residues threonine 161, 177 to 178, glycine 206, 386 to 390, and 588 to 592 each bind substrate; these read SC, NLCSE, and PTGSI. Cysteine 178 and cysteine 415 are disulfide-bonded. Asparagine 386 functions as the Proton acceptor in the catalytic mechanism. Cysteine 388 functions as the Cysteine radical intermediate in the catalytic mechanism. Glutamate 390 functions as the Proton acceptor in the catalytic mechanism.

This sequence belongs to the ribonucleoside diphosphate reductase large chain family. As to quaternary structure, tetramer of two alpha and two beta subunits.

The enzyme catalyses a 2'-deoxyribonucleoside 5'-diphosphate + [thioredoxin]-disulfide + H2O = a ribonucleoside 5'-diphosphate + [thioredoxin]-dithiol. Under complex allosteric control mediated by deoxynucleoside triphosphates and ATP binding. The type of nucleotide bound at the specificity site determines substrate preference. It seems probable that ATP makes the enzyme reduce CDP and UDP, dGTP favors ADP reduction and dTTP favors GDP reduction. Lacks the N-terminal activity site. In terms of biological role, provides the precursors necessary for DNA synthesis. Catalyzes the biosynthesis of deoxyribonucleotides from the corresponding ribonucleotides. R1E contains the binding sites for both substrates and allosteric effectors and carries out the actual reduction of the ribonucleotide. The protein is Ribonucleoside-diphosphate reductase 2 subunit alpha (nrdE) of Salmonella typhimurium (strain LT2 / SGSC1412 / ATCC 700720).